The sequence spans 215 residues: Cytochrome b6 (215 aa).

A helical transmembrane segment spans residues 32-52; that stretch reads IFYCLGGIVFVSFLIQVATGF. Cysteine 35 is a heme c binding site. 2 residues coordinate heme b: histidine 86 and histidine 100. A run of 3 helical transmembrane segments spans residues 90–110, 116–136, and 186–206; these read ASMMVLMMILHVFRVYLTGGF, LTWVTGVILGVLTVSFGVTGY, and LHTFVLPLLTAVFMLMHFLMI. Histidine 187 and histidine 202 together coordinate heme b.

The protein belongs to the cytochrome b family. PetB subfamily. As to quaternary structure, the 4 large subunits of the cytochrome b6-f complex are cytochrome b6, subunit IV (17 kDa polypeptide, PetD), cytochrome f and the Rieske protein, while the 4 small subunits are PetG, PetL, PetM and PetN. The complex functions as a dimer. Heme b serves as cofactor. Requires heme c as cofactor.

Its subcellular location is the plastid. The protein resides in the chloroplast thylakoid membrane. Component of the cytochrome b6-f complex, which mediates electron transfer between photosystem II (PSII) and photosystem I (PSI), cyclic electron flow around PSI, and state transitions. The chain is Cytochrome b6 from Porphyra purpurea (Red seaweed).